A 240-amino-acid polypeptide reads, in one-letter code: 2-C-methyl-D-erythritol 4-phosphate cytidylyltransferase (240 aa).

This sequence belongs to the IspD/TarI cytidylyltransferase family. IspD subfamily.

The enzyme catalyses 2-C-methyl-D-erythritol 4-phosphate + CTP + H(+) = 4-CDP-2-C-methyl-D-erythritol + diphosphate. The protein operates within isoprenoid biosynthesis; isopentenyl diphosphate biosynthesis via DXP pathway; isopentenyl diphosphate from 1-deoxy-D-xylulose 5-phosphate: step 2/6. Catalyzes the formation of 4-diphosphocytidyl-2-C-methyl-D-erythritol from CTP and 2-C-methyl-D-erythritol 4-phosphate (MEP). The chain is 2-C-methyl-D-erythritol 4-phosphate cytidylyltransferase from Chlorobium luteolum (strain DSM 273 / BCRC 81028 / 2530) (Pelodictyon luteolum).